Consider the following 122-residue polypeptide: MIQTETRLKVADNSGAREILTIKVLGGSGRKFANIGDVIVASVKQATPGGAVKKGDVVKAVIVRTKSGARRKDGSYIKFDENAAVIIREDKTPRGTRIFGPVARELRDGGFMKIVSLAPEVL.

Belongs to the universal ribosomal protein uL14 family. Part of the 50S ribosomal subunit. Forms a cluster with proteins L3 and L19. In the 70S ribosome, L14 and L19 interact and together make contacts with the 16S rRNA in bridges B5 and B8.

Binds to 23S rRNA. Forms part of two intersubunit bridges in the 70S ribosome. The sequence is that of Large ribosomal subunit protein uL14 from Streptococcus gordonii (strain Challis / ATCC 35105 / BCRC 15272 / CH1 / DL1 / V288).